A 352-amino-acid polypeptide reads, in one-letter code: Phosphoribosylformylglycinamidine cyclo-ligase (352 aa).

It belongs to the AIR synthase family.

Its subcellular location is the cytoplasm. The catalysed reaction is 2-formamido-N(1)-(5-O-phospho-beta-D-ribosyl)acetamidine + ATP = 5-amino-1-(5-phospho-beta-D-ribosyl)imidazole + ADP + phosphate + H(+). It functions in the pathway purine metabolism; IMP biosynthesis via de novo pathway; 5-amino-1-(5-phospho-D-ribosyl)imidazole from N(2)-formyl-N(1)-(5-phospho-D-ribosyl)glycinamide: step 2/2. The polypeptide is Phosphoribosylformylglycinamidine cyclo-ligase (Stenotrophomonas maltophilia (strain R551-3)).